The chain runs to 195 residues: dITP/XTP pyrophosphatase (195 aa).

8–13 lines the substrate pocket; it reads SNNQGK. Positions 39 and 68 each coordinate Mg(2+). Asp-68 (proton acceptor) is an active-site residue. Substrate-binding positions include Ser-69, 149 to 152, Lys-172, and 177 to 178; these read FGYD and HR.

It belongs to the HAM1 NTPase family. As to quaternary structure, homodimer. Mg(2+) is required as a cofactor.

It catalyses the reaction XTP + H2O = XMP + diphosphate + H(+). The catalysed reaction is dITP + H2O = dIMP + diphosphate + H(+). The enzyme catalyses ITP + H2O = IMP + diphosphate + H(+). In terms of biological role, pyrophosphatase that catalyzes the hydrolysis of nucleoside triphosphates to their monophosphate derivatives, with a high preference for the non-canonical purine nucleotides XTP (xanthosine triphosphate), dITP (deoxyinosine triphosphate) and ITP. Seems to function as a house-cleaning enzyme that removes non-canonical purine nucleotides from the nucleotide pool, thus preventing their incorporation into DNA/RNA and avoiding chromosomal lesions. In Staphylococcus aureus (strain Mu50 / ATCC 700699), this protein is dITP/XTP pyrophosphatase.